Consider the following 299-residue polypeptide: Undecaprenyl-diphosphatase (299 aa).

The next 8 helical transmembrane spans lie at 10 to 32 (LFSL…RNLV), 63 to 83 (PGVS…IAYF), 112 to 132 (LAIA…KLFW), 143 to 163 (LPSI…AESF), 178 to 198 (GFVV…RSGS), 213 to 233 (AARF…LVEL), 243 to 263 (GGVL…WLAI), and 276 to 296 (WIFV…WLSG).

It belongs to the UppP family.

It localises to the cell inner membrane. The enzyme catalyses di-trans,octa-cis-undecaprenyl diphosphate + H2O = di-trans,octa-cis-undecaprenyl phosphate + phosphate + H(+). Functionally, catalyzes the dephosphorylation of undecaprenyl diphosphate (UPP). Confers resistance to bacitracin. The polypeptide is Undecaprenyl-diphosphatase (Prochlorococcus marinus (strain MIT 9313)).